Reading from the N-terminus, the 502-residue chain is Nondiscriminating glutamyl-tRNA synthetase EARS2, mitochondrial (502 aa).

A mitochondrion-targeting transit peptide spans 1–20; it reads MAGMLREVCGAAASGLRVRF. Position 19–21 (19–21) interacts with L-glutamate; that stretch reads RFG. Residues 24–32 carry the 'HIGH' region motif; sequence PTGFLHLGG. H29 contributes to the ATP binding site. L-glutamate-binding positions include E55, 207 to 211, and R225; that span reads YHLAN. Residues E228 and 263–267 contribute to the ATP site; that span reads KLSKR. The short motif at 263 to 267 is the 'KMSKS' region element; sequence KLSKR.

It belongs to the class-I aminoacyl-tRNA synthetase family. Glutamate--tRNA ligase type 1 subfamily.

It is found in the mitochondrion matrix. It carries out the reaction tRNA(Glx) + L-glutamate + ATP = L-glutamyl-tRNA(Glx) + AMP + diphosphate. The catalysed reaction is tRNA(Glu) + L-glutamate + ATP = L-glutamyl-tRNA(Glu) + AMP + diphosphate. The enzyme catalyses tRNA(Gln) + L-glutamate + ATP = L-glutamyl-tRNA(Gln) + AMP + diphosphate. Non-discriminating glutamyl-tRNA synthetase that catalyzes aminoacylation of both mitochondrial tRNA(Glu) and tRNA(Gln) and participates in RNA aminoacylation for mitochondrial protein translation. Attachs glutamate to tRNA(Glu) or tRNA(Gln) in a two-step reaction: glutamate is first activated by ATP to form Glu-AMP and then transferred to the acceptor end of tRNA(Glu) or tRNA(Gln). The polypeptide is Nondiscriminating glutamyl-tRNA synthetase EARS2, mitochondrial (Gallus gallus (Chicken)).